The following is a 62-amino-acid chain: Defensin BmKDfsin4 (62 aa).

Residues 1–24 (MKTIVLLFVLALVFCTLEMGIVEA) form the signal peptide. 3 disulfides stabilise this stretch: Cys-28–Cys-49, Cys-35–Cys-57, and Cys-39–Cys-59.

This sequence belongs to the invertebrate defensin family. Type 2 subfamily.

It is found in the secreted. Dual-function peptide with antimicrobial and potassium channel-blocking activities. Shows inhibitory activity against Gram-positive bacteria such as S.aureus, B.subtilis, and M.luteus as well as methicillin-resistant S.aureus (MIC=0.1-20 uM). Does not act on bacteria by disrupting membranes. Also moderately inhibits Kv1.1/KCNA1 (25.2% inhibition at 1 uM), Kv1.2/KCNA2 (30.5% inhibition at 1 uM), and Kv1.3/KCNA3 potassium channels (IC(50)=510.2 nM, 61% inhibition at 1 uM). Inhibits potassium channels by interacting with the pore region. Does not show hemolytic activity. In vitro, dose-dependently decreases the production of Hepatitis B virus (HBV) DNA and HBV viral proteins in both culture medium and cell lysate. This is Defensin BmKDfsin4 from Olivierus martensii (Manchurian scorpion).